The following is a 745-amino-acid chain: MVPHRARRLLNPMAVGPLAQQLGSLTVFTRDDFEEEWHLVASGGFSKVFQARHKRWRTQYAIKCSPCLQKETTSSEVTCLFEEAVKMEKIKFQHIVSIYGVCKQPLGIVMEFMASGSLEKTLPTHSLCWPLKLRIIHETSLAMNFLHSIKPPLLHLDLKPGNILLDNNMHVKISDFGLSKWMEQSTQKQYIERSALRGTLSYIPPEMFLENNKAPGPEYDVYSFAIVIWEILTQKKPYAGLNMMTIIIRVAAGMRPSLQDVSDEWPEEVHQMVNLMKRCWDQDPKKRPCFLNVAVETDMLLSLFQSPMTDPGCEALTQKVSCKPSLSQPHKVSKEVNQEIADSVSSDSLKWILQLSDSKSLVASDVYENRVTPLHFLVAGGSLEQVRLLLSHDVDVDCQTASGYTPLLIATQDQQPDLCALLLAHGADTNLADEDGWAPLHFAAQNGDDHTARLLLDHGALVNAREHEGWTPLHLAAQNNFENVARLLVSRQADLSPHEAEGKTPLHVAAYFGHIGLVKLLSGQGAELDAQQRNLRTPLHLAVERGKVRAIQHLLKCGALPDALDHSGYSPLHIAAARGKDLIFKMLLRYGASLELRTQQGWTPLHLATYKGHLEIIHQLAKSHVDLDALGSMQWTPLHLAAFQGEEGVMLALLQCGANPNAAEQSGWTPLHLAVHKGTFLGITHLLEYGADIHACNKVGWTPAHLAALKGNTAILKVLVKAAAQVDVKGGVSCTPLQLAIHSPK.

In terms of domain architecture, Protein kinase spans 34–301; the sequence is EEEWHLVASG…NVAVETDMLL (268 aa). ATP is bound by residues 40 to 48 and Lys63; that span reads VASGGFSKV. Asp157 serves as the catalytic Proton acceptor. 11 ANK repeats span residues 369–398, 402–431, 435–464, 468–497, 501–530, 534–563, 567–596, 600–629, 633–662, 666–695, and 699–728; these read NRVTPLHFLVAGGSLEQVRLLLSHDVDVDC, SGYTPLLIATQDQQPDLCALLLAHGADTNL, DGWAPLHFAAQNGDDHTARLLLDHGALVNA, EGWTPLHLAAQNNFENVARLLVSRQADLSP, EGKTPLHVAAYFGHIGLVKLLSGQGAELDA, NLRTPLHLAVERGKVRAIQHLLKCGALPDA, SGYSPLHIAAARGKDLIFKMLLRYGASLEL, QGWTPLHLATYKGHLEIIHQLAKSHVDLDA, MQWTPLHLAAFQGEEGVMLALLQCGANPNA, SGWTPLHLAVHKGTFLGITHLLEYGADIHA, and VGWTPAHLAALKGNTAILKVLVKAAAQVDV.

Belongs to the protein kinase superfamily. TKL Ser/Thr protein kinase family.

It carries out the reaction L-seryl-[protein] + ATP = O-phospho-L-seryl-[protein] + ADP + H(+). The enzyme catalyses L-threonyl-[protein] + ATP = O-phospho-L-threonyl-[protein] + ADP + H(+). The sequence is that of Ankyrin repeat and protein kinase domain-containing protein 1 (Ankk1) from Mus musculus (Mouse).